Consider the following 260-residue polypeptide: Manganese transport system ATP-binding protein MntA (260 aa).

Residues 10-245 (ISVDGVSVTY…NLELTFGGLP (236 aa)) form the ABC transporter domain. Residue 43 to 50 (GPNGSGKS) coordinates ATP.

It belongs to the ABC transporter superfamily.

Functionally, part of an ATP-driven transport system for manganese. This Synechocystis sp. (strain ATCC 27184 / PCC 6803 / Kazusa) protein is Manganese transport system ATP-binding protein MntA (mntA).